The sequence spans 720 residues: Probable ATP-dependent RNA helicase DHX35 (720 aa).

The Helicase ATP-binding domain maps to 64 to 229 (LYLIENYQTV…FNQNETSDPA (166 aa)). Residue 77 to 84 (GETGCGKS) coordinates ATP. The DEAH box signature appears at 176 to 179 (DEAH). One can recognise a Helicase C-terminal domain in the interval 261-438 (TVETVVKIHQ…PVILQLKALG (178 aa)).

This sequence belongs to the DEAD box helicase family. DEAH subfamily. In terms of assembly, identified in the spliceosome C complex.

It catalyses the reaction ATP + H2O = ADP + phosphate + H(+). Functionally, may be involved in pre-mRNA splicing. The chain is Probable ATP-dependent RNA helicase DHX35 (DHX35) from Pongo abelii (Sumatran orangutan).